Here is a 251-residue protein sequence, read N- to C-terminus: Type III pantothenate kinase (251 aa).

Position 6-13 (6-13) interacts with ATP; it reads DCGNSFIK. Substrate-binding positions include Y93 and 100-103; that span reads GLDR. D102 (proton acceptor) is an active-site residue. A K(+)-binding site is contributed by D122. T125 serves as a coordination point for ATP. Residue T182 coordinates substrate.

Belongs to the type III pantothenate kinase family. Homodimer. NH4(+) is required as a cofactor. The cofactor is K(+).

It is found in the cytoplasm. It catalyses the reaction (R)-pantothenate + ATP = (R)-4'-phosphopantothenate + ADP + H(+). It functions in the pathway cofactor biosynthesis; coenzyme A biosynthesis; CoA from (R)-pantothenate: step 1/5. Its function is as follows. Catalyzes the phosphorylation of pantothenate (Pan), the first step in CoA biosynthesis. The polypeptide is Type III pantothenate kinase (Azotobacter vinelandii (strain DJ / ATCC BAA-1303)).